Here is a 431-residue protein sequence, read N- to C-terminus: MWAKLFLRPSFVNRVHLTWSCRALLTMQLKTKEFESLFTDGLVGLAEIFQKNQFELRIAGGAVRDLLSGKRPEDVDFATTATPEEMKSMFQTAGVRMINNKGEKHGTITARLHEENFEVTTLRVDVQTDGRHAEVEFTTDWQKDAERRDLTINSMFLGLDGTLYDYFQGYEDLKNRKVRFVGSASLRIQEDYLRILRYFRFYGRVAAEPGQHEPETLEAIRENARGLAGISGERIWVELKKMLVGNHAGHLLELVYELGLAQYTGLPADGDVEEMKQVWQRAHVSSPKPMTVLAALFRKQADVENLDQRLKVSREEKNLGLFLVKYRRDLVKGHDEHDTMKPYTDFITDSREPDTQSKVLELLKYQGENKLLDELRRWSIPRFPVSGHDLRKLGYTSGKEIGTILQELRDMWKKSRYQMSKDELLSTLSQS.

Residues 1 to 31 (MWAKLFLRPSFVNRVHLTWSCRALLTMQLKT) constitute a mitochondrion transit peptide. ATP contacts are provided by Gly61 and Arg64. The CTP site is built by Gly61 and Arg64. Positions 74 and 76 each coordinate Mg(2+). ATP is bound by residues Arg148, Asp191, Arg194, Arg197, and Arg200. CTP-binding residues include Arg148, Asp191, Arg194, Arg197, and Arg200.

The protein belongs to the tRNA nucleotidyltransferase/poly(A) polymerase family. Monomer, and homodimer. The cofactor is Mg(2+). In terms of tissue distribution, expressed ubiquitously during early embryogenesis.

It is found in the mitochondrion. The protein resides in the cytoplasm. It localises to the nucleus. It carries out the reaction a tRNA precursor + 2 CTP + ATP = a tRNA with a 3' CCA end + 3 diphosphate. The enzyme catalyses a tRNA with a 3' CCA end + 2 CTP + ATP = a tRNA with a 3' CCACCA end + 3 diphosphate. Nucleotidyltransferase that catalyzes the addition and repair of the essential 3'-terminal CCA sequence in tRNAs, which is necessary for the attachment of amino acids to the 3' terminus of tRNA molecules, using CTP and ATP as substrates. tRNA 3'-terminal CCA addition is required both for tRNA processing and repair. Promotes tRNA repair and recycling downstream of the ribosome-associated quality control (RQC) pathway by mediating addition of the tRNA 3'-terminal CCA following cleavage by ankzf1 and repair by elac1. Also involved in tRNA surveillance by mediating tandem CCA addition to generate a CCACCA at the 3' terminus of unstable tRNAs and tRNA-like transcripts. While stable tRNAs receive only 3'-terminal CCA, unstable tRNAs beginning with GG are marked with CCACCA and rapidly degraded. The structural flexibility of RNA controls the choice between CCA versus CCACCA addition: following the first CCA addition cycle, nucleotide-binding to the active site triggers a clockwise screw motion, producing torque on the RNA. This ejects stable RNAs, whereas unstable RNAs are refolded while bound to the enzyme and subjected to a second CCA catalytic cycle. The sequence is that of CCA tRNA nucleotidyltransferase 1, mitochondrial from Danio rerio (Zebrafish).